The chain runs to 152 residues: Gamma-glutamylaminecyclotransferase C (152 aa).

Y9–L12 serves as a coordination point for substrate. Catalysis depends on E84, which acts as the Proton acceptor.

This sequence belongs to the gamma-glutamylcyclotransferase family.

The enzyme catalyses epsilon-(gamma-L-glutamyl)-L-lysine = 5-oxo-L-proline + L-lysine. Its function is as follows. May contribute to degradation of proteins cross-linked by transglutaminases by degrading the cross-link between a lysine and a glutamic acid residue. Catalyzes the formation of 5-oxo-L-proline from L-gamma-glutamyl-L-epsilon-lysine. The chain is Gamma-glutamylaminecyclotransferase C (ggact.3) from Danio rerio (Zebrafish).